A 499-amino-acid chain; its full sequence is Protein-tyrosine sulfotransferase (499 aa).

At 1–9 the chain is on the cytoplasmic side; it reads MRLPYRNKK. A helical; Signal-anchor for type II membrane protein membrane pass occupies residues 10-30; that stretch reads VTLWVLFGIIVITMFLFKFTE. Over 31–499 the chain is Lumenal; it reads LRPTCLFKVD…NIMEDPMADT (469 aa). 80–84 is a binding site for 3'-phosphoadenylyl sulfate; that stretch reads RSGTT. Cysteine 98 and cysteine 158 are oxidised to a cystine. Catalysis depends on glutamate 101, which acts as the Proton donor/acceptor. The tract at residues 103 to 107 is interaction with peptide substrate; sequence RVIPR. 3'-phosphoadenylyl sulfate-binding residues include arginine 185, serine 193, and arginine 197. An intrachain disulfide couples cysteine 227 to cysteine 235. Residues tyrosine 240, 287–296, and lysine 302 contribute to the 3'-phosphoadenylyl sulfate site; that span reads SSDQVIKPVN. N-linked (GlcNAc...) asparagine glycosylation is found at asparagine 346 and asparagine 380. 2 disordered regions span residues 362 to 460 and 476 to 499; these read KQVL…QKPK and NNINNNINNNNNNNNIMEDPMADT. Composition is skewed to low complexity over residues 375–400 and 408–434; these read TNTIINNSNNKDNNNNQYTINKIIPE and HVQQQHLQQQQQQHLQQQQHQRQQQQQ. Positions 443-460 are enriched in basic and acidic residues; the sequence is EREAEPDREQQLLHQKPK. A compositionally biased stretch (low complexity) spans 476–491; the sequence is NNINNNINNNNNNNNI.

The protein belongs to the protein sulfotransferase family.

Its subcellular location is the golgi apparatus membrane. It catalyses the reaction L-tyrosyl-[protein] + 3'-phosphoadenylyl sulfate = O-sulfo-L-tyrosine-[protein] + adenosine 3',5'-bisphosphate + H(+). Catalyzes the O-sulfation of tyrosine residues within acidic motifs of polypeptides. Has a role in protein secretion. This chain is Protein-tyrosine sulfotransferase, found in Drosophila melanogaster (Fruit fly).